The primary structure comprises 425 residues: MAGAESPTECQAELEPVVSLVDVLEEDEELENEACAVLGGSDSEKCSYSQGSVGRQALYACSTCTPEGEEPAGICLACSYECHGSHKLFELYTKRNFRCDCGNSKFKNLECKLFPDKSKVNSCNKYNDNFFGLYCVCKRPYPDPEDEVPDEMIQCVVCEDWFHGRHLGAIPPESGDFQEMVCQACMRRCSFLWAYAAQLAVTRISAEDDGLLPNATGMGDEDVSKPENGAPQDNGLKEDAPEHGRDSVNEVKAEQKNEPCSSSSSESDLQTVFKKENIKTEPQSSCRLQELQAKQFVKKDAATYWPLNWRSKLCTCQDCMKMYGELDVLFLTDECDTVLAYENKGKNDQATDRRDPLMDTLSSMNRVQQVELICEYNDLKTELKDYLKRFADEGTVVKREDIQQFFEEFQSKKRRRVDGLQYYCS.

Residues 44–116 form a UBR-type zinc finger; the sequence is EKCSYSQGSV…KNLECKLFPD (73 aa). The PHD-type; atypical zinc finger occupies 132 to 188; the sequence is GLYCVCKRPYPDPEDEVPDEMIQCVVCEDWFHGRHLGAIPPESGDFQEMVCQACMRR. A disordered region spans residues 212–269; sequence LPNATGMGDEDVSKPENGAPQDNGLKEDAPEHGRDSVNEVKAEQKNEPCSSSSSESDL. Glycyl lysine isopeptide (Lys-Gly) (interchain with G-Cter in SUMO2) cross-links involve residues lysine 225 and lysine 252. Residues 235 to 257 show a composition bias toward basic and acidic residues; that stretch reads GLKEDAPEHGRDSVNEVKAEQKN. The residue at position 264 (serine 264) is a Phosphoserine. Residues lysine 274 and lysine 398 each participate in a glycyl lysine isopeptide (Lys-Gly) (interchain with G-Cter in SUMO2) cross-link.

As to expression, expressed in testis and sperm (at protein level).

It catalyses the reaction S-ubiquitinyl-[E2 ubiquitin-conjugating enzyme]-L-cysteine + [acceptor protein]-L-lysine = [E2 ubiquitin-conjugating enzyme]-L-cysteine + N(6)-ubiquitinyl-[acceptor protein]-L-lysine.. It functions in the pathway protein modification; protein ubiquitination. Its function is as follows. E3 ubiquitin-protein ligase which is a component of the N-end rule pathway. Recognizes and binds to proteins bearing specific N-terminal residues that are destabilizing according to the N-end rule, leading to their ubiquitination and subsequent degradation. This is Putative E3 ubiquitin-protein ligase UBR7 (Ubr7) from Mus musculus (Mouse).